Consider the following 356-residue polypeptide: UDP-N-acetylglucosamine--N-acetylmuramyl-(pentapeptide) pyrophosphoryl-undecaprenol N-acetylglucosamine transferase (356 aa).

3 residues coordinate UDP-N-acetyl-alpha-D-glucosamine: arginine 166, serine 196, and glutamine 290.

It belongs to the glycosyltransferase 28 family. MurG subfamily.

It localises to the cell membrane. The catalysed reaction is Mur2Ac(oyl-L-Ala-gamma-D-Glu-L-Lys-D-Ala-D-Ala)-di-trans,octa-cis-undecaprenyl diphosphate + UDP-N-acetyl-alpha-D-glucosamine = beta-D-GlcNAc-(1-&gt;4)-Mur2Ac(oyl-L-Ala-gamma-D-Glu-L-Lys-D-Ala-D-Ala)-di-trans,octa-cis-undecaprenyl diphosphate + UDP + H(+). It participates in cell wall biogenesis; peptidoglycan biosynthesis. In terms of biological role, cell wall formation. Catalyzes the transfer of a GlcNAc subunit on undecaprenyl-pyrophosphoryl-MurNAc-pentapeptide (lipid intermediate I) to form undecaprenyl-pyrophosphoryl-MurNAc-(pentapeptide)GlcNAc (lipid intermediate II). The sequence is that of UDP-N-acetylglucosamine--N-acetylmuramyl-(pentapeptide) pyrophosphoryl-undecaprenol N-acetylglucosamine transferase from Staphylococcus aureus (strain USA300).